Reading from the N-terminus, the 365-residue chain is MIWLKNLRVPILLAIILVVYNEYFIFFIAFSSCQWPCKYGRCSESSVKAFMISDTHLLGKINGHWLDKLKREWQMYQSFWISTWIHSPDVTFFLGDLMDEGKWAGRPVFEAYAERFKKLFGDNEKVITLAGNHDLGFHYAIMPETLEMFKKEFRRGLIDEMKIKKHRFVLINSMAMHGDGCRLCHEAELILEKIKSRNPKNRPIVLQHFPLYRKSDAECDQVDEQHEIDLKEMYREQWDTLSKESSLQIIDSLNPKAVFGGHTHKMCKKKWNKTGNSEYFYEYTVNSFSWRNGDVPAMLLVVIDGDNVLVSSCRLPSEILQIMVYIFGGIGIVILAFILISRRVRIFKRRPSYSLLMYRSQEKCD.

A helical transmembrane segment spans residues 10–30 (PILLAIILVVYNEYFIFFIAF). 6 residues coordinate a divalent metal cation: Asp-54, Asp-96, Asn-132, His-208, His-262, and His-264. Residues 319–339 (ILQIMVYIFGGIGIVILAFIL) traverse the membrane as a helical segment.

It belongs to the metallophosphoesterase superfamily. MPPE1 family. Requires Mn(2+) as cofactor.

The protein resides in the endoplasmic reticulum-Golgi intermediate compartment membrane. The protein localises to the golgi apparatus. It is found in the cis-Golgi network membrane. In terms of biological role, metallophosphoesterase required for transport of GPI-anchor proteins from the endoplasmic reticulum to the Golgi. Acts in lipid remodeling steps of GPI-anchor maturation by mediating the removal of a side-chain ethanolamine-phosphate (EtNP) from the second Man (Man2) of the GPI intermediate, an essential step for efficient transport of GPI-anchor proteins. This Caenorhabditis elegans protein is Metallophosphoesterase 1 homolog.